A 180-amino-acid chain; its full sequence is Regulator of G-protein signaling 8 (180 aa).

Position 26 is a phosphoserine (Ser26). In terms of domain architecture, RGS spans 56–171 (SFDVLLSHKY…FLRSKMYLDL (116 aa)).

As to quaternary structure, interacts with GNAO1 and GNAI3. As to expression, expressed at high levels in brain. Very little expression detected in other tissues. Detected in Purkinje cells in the cerebellum.

The protein localises to the cell membrane. The protein resides in the membrane. It localises to the perikaryon. It is found in the cell projection. Its subcellular location is the dendrite. The protein localises to the nucleus. In terms of biological role, regulates G protein-coupled receptor signaling cascades, including signaling via muscarinic acetylcholine receptor CHRM2 and dopamine receptor DRD2. Inhibits signal transduction by increasing the GTPase activity of G protein alpha subunits, thereby driving them into their inactive GDP-bound form. Modulates the activity of potassium channels that are activated in response to DRD2 and CHRM2 signaling. This is Regulator of G-protein signaling 8 (Rgs8) from Rattus norvegicus (Rat).